The sequence spans 709 residues: Phosphoribosylformylglycinamidine synthase subunit PurL (709 aa).

The active site involves His-36. ATP is bound by residues Tyr-39 and Lys-80. Glu-82 is a binding site for Mg(2+). Residues 83 to 86 and Arg-105 contribute to the substrate site; that span reads SHNH. Catalysis depends on His-84, which acts as the Proton acceptor. Residue Asp-106 participates in Mg(2+) binding. Gln-226 provides a ligand contact to substrate. Asp-252 serves as a coordination point for Mg(2+). 294-296 lines the substrate pocket; it reads ETQ. 2 residues coordinate ATP: Asp-470 and Gly-507. Ser-510 contacts substrate.

The protein belongs to the FGAMS family. Monomer. Part of the FGAM synthase complex composed of 1 PurL, 1 PurQ and 2 PurS subunits.

Its subcellular location is the cytoplasm. The enzyme catalyses N(2)-formyl-N(1)-(5-phospho-beta-D-ribosyl)glycinamide + L-glutamine + ATP + H2O = 2-formamido-N(1)-(5-O-phospho-beta-D-ribosyl)acetamidine + L-glutamate + ADP + phosphate + H(+). It functions in the pathway purine metabolism; IMP biosynthesis via de novo pathway; 5-amino-1-(5-phospho-D-ribosyl)imidazole from N(2)-formyl-N(1)-(5-phospho-D-ribosyl)glycinamide: step 1/2. Part of the phosphoribosylformylglycinamidine synthase complex involved in the purines biosynthetic pathway. Catalyzes the ATP-dependent conversion of formylglycinamide ribonucleotide (FGAR) and glutamine to yield formylglycinamidine ribonucleotide (FGAM) and glutamate. The FGAM synthase complex is composed of three subunits. PurQ produces an ammonia molecule by converting glutamine to glutamate. PurL transfers the ammonia molecule to FGAR to form FGAM in an ATP-dependent manner. PurS interacts with PurQ and PurL and is thought to assist in the transfer of the ammonia molecule from PurQ to PurL. In Saccharolobus islandicus (strain M.16.27) (Sulfolobus islandicus), this protein is Phosphoribosylformylglycinamidine synthase subunit PurL.